The primary structure comprises 89 residues: Defensin-like protein 103 (89 aa).

Positions Met1 to Cys24 are cleaved as a signal peptide. Intrachain disulfides connect Cys46–Cys84, Cys52–Cys75, Cys61–Cys82, and Cys65–Cys83.

The protein belongs to the DEFL family.

The protein localises to the secreted. The sequence is that of Defensin-like protein 103 from Arabidopsis thaliana (Mouse-ear cress).